The primary structure comprises 84 residues: CDC42 small effector protein 2 (84 aa).

2 S-palmitoyl cysteine lipidation sites follow: cysteine 10 and cysteine 11. The CRIB domain maps to 29-42; sequence IGEPTNFAHTAHVG. Residues serine 43 and serine 52 each carry the phosphoserine modification.

Belongs to the CDC42SE/SPEC family. Interacts with CDC42 (in GTP-bound form). Interacts weakly with RAC1 and not at all with RHOA.

It localises to the cytoplasm. It is found in the cytoskeleton. Its subcellular location is the cell membrane. The protein localises to the cell projection. The protein resides in the phagocytic cup. Its function is as follows. Probably involved in the organization of the actin cytoskeleton by acting downstream of CDC42, inducing actin filament assembly. Alters CDC42-induced cell shape changes. In activated T-cells, may play a role in CDC42-mediated F-actin accumulation at the immunological synapse. May play a role in early contractile events in phagocytosis in macrophages. This Pongo abelii (Sumatran orangutan) protein is CDC42 small effector protein 2 (CDC42SE2).